A 162-amino-acid polypeptide reads, in one-letter code: Small ribosomal subunit protein uS13 (162 aa).

The segment at 142 to 162 (RGQRTKSTGRRGSTVGVSRKK) is disordered.

The protein belongs to the universal ribosomal protein uS13 family. Part of the 30S ribosomal subunit. Forms a loose heterodimer with protein S19. Forms two bridges to the 50S subunit in the 70S ribosome.

Functionally, located at the top of the head of the 30S subunit, it contacts several helices of the 16S rRNA. In the 70S ribosome it contacts the 23S rRNA (bridge B1a) and protein L5 of the 50S subunit (bridge B1b), connecting the 2 subunits; these bridges are implicated in subunit movement. This is Small ribosomal subunit protein uS13 from Methanosarcina mazei (strain ATCC BAA-159 / DSM 3647 / Goe1 / Go1 / JCM 11833 / OCM 88) (Methanosarcina frisia).